We begin with the raw amino-acid sequence, 862 residues long: Glucans biosynthesis glucosyltransferase H (862 aa).

The tract at residues 1-25 is disordered; sequence MELPATSGLNAQPGNAEGTTASTRP. Residues 7–25 show a composition bias toward polar residues; it reads SGLNAQPGNAEGTTASTRP. Transmembrane regions (helical) follow at residues 188–210, 545–567, 597–619, 626–648, and 708–730; these read RLTL…SSVL, GVMA…ALLA, ALFS…VLWA, GGAV…AAPV, and FLWW…VFSS.

This sequence belongs to the glycosyltransferase 2 family. OpgH subfamily.

Its subcellular location is the cell inner membrane. Its pathway is glycan metabolism; osmoregulated periplasmic glucan (OPG) biosynthesis. Involved in the biosynthesis of osmoregulated periplasmic glucans (OPGs). The chain is Glucans biosynthesis glucosyltransferase H from Ralstonia nicotianae (strain ATCC BAA-1114 / GMI1000) (Ralstonia solanacearum).